Consider the following 227-residue polypeptide: LexA repressor (227 aa).

Positions 26–46 (FDEMKEALDLASKSGIHRLIT) form a DNA-binding region, H-T-H motif. Catalysis depends on for autocatalytic cleavage activity residues Ser-147 and Lys-185.

It belongs to the peptidase S24 family. Homodimer.

The catalysed reaction is Hydrolysis of Ala-|-Gly bond in repressor LexA.. Functionally, represses a number of genes involved in the response to DNA damage (SOS response), including recA and lexA. In the presence of single-stranded DNA, RecA interacts with LexA causing an autocatalytic cleavage which disrupts the DNA-binding part of LexA, leading to derepression of the SOS regulon and eventually DNA repair. The protein is LexA repressor of Hyphomonas neptunium (strain ATCC 15444).